A 450-amino-acid chain; its full sequence is Phosphoglucosamine mutase (450 aa).

Ser101 serves as the catalytic Phosphoserine intermediate. The Mg(2+) site is built by Ser101, Asp242, Asp244, and Asp246. At Ser101 the chain carries Phosphoserine.

This sequence belongs to the phosphohexose mutase family. It depends on Mg(2+) as a cofactor. Post-translationally, activated by phosphorylation.

It carries out the reaction alpha-D-glucosamine 1-phosphate = D-glucosamine 6-phosphate. Catalyzes the conversion of glucosamine-6-phosphate to glucosamine-1-phosphate. The protein is Phosphoglucosamine mutase of Rhodopseudomonas palustris (strain HaA2).